Here is a 122-residue protein sequence, read N- to C-terminus: Large ribosomal subunit protein uL14 (122 aa).

Belongs to the universal ribosomal protein uL14 family. In terms of assembly, part of the 50S ribosomal subunit. Forms a cluster with proteins L3 and L19. In the 70S ribosome, L14 and L19 interact and together make contacts with the 16S rRNA in bridges B5 and B8.

Its function is as follows. Binds to 23S rRNA. Forms part of two intersubunit bridges in the 70S ribosome. The sequence is that of Large ribosomal subunit protein uL14 from Paracoccus denitrificans (strain Pd 1222).